We begin with the raw amino-acid sequence, 198 residues long: Recombination protein RecR (198 aa).

The segment at Cys58–Cys73 adopts a C4-type zinc-finger fold. Residues Ser81–Pro175 form the Toprim domain.

The protein belongs to the RecR family.

In terms of biological role, may play a role in DNA repair. It seems to be involved in an RecBC-independent recombinational process of DNA repair. It may act with RecF and RecO. The chain is Recombination protein RecR from Clostridium acetobutylicum (strain ATCC 824 / DSM 792 / JCM 1419 / IAM 19013 / LMG 5710 / NBRC 13948 / NRRL B-527 / VKM B-1787 / 2291 / W).